Here is a 362-residue protein sequence, read N- to C-terminus: Heat-inducible transcription repressor HrcA (362 aa).

It belongs to the HrcA family.

Its function is as follows. Negative regulator of class I heat shock genes (grpE-dnaK-dnaJ and groELS operons). Prevents heat-shock induction of these operons. In Rhodopseudomonas palustris (strain ATCC BAA-98 / CGA009), this protein is Heat-inducible transcription repressor HrcA.